A 289-amino-acid chain; its full sequence is Mitochondrial fission regulator 1-like (289 aa).

Thr-27 bears the Phosphothreonine mark. Phosphoserine occurs at positions 38, 100, 107, 221, 222, 235, 258, and 270.

It belongs to the MTFR1 family. Phosphorylated by AMPK. Upon stress, phosphorylation by AMPK is sufficient to induce mitochondrial fragmentation.

The protein resides in the mitochondrion outer membrane. Functionally, mitochondrial protein required for adaptation of miochondrial dynamics to metabolic changes. Regulates mitochondrial morphology at steady state and mediates AMPK-dependent stress-induced mitochondrial fragmentation via the control of OPA1 levels. The chain is Mitochondrial fission regulator 1-like (MTFR1L) from Bos taurus (Bovine).